Consider the following 1537-residue polypeptide: MSVPSAPHQRAESKNRVPRPGQKNRKLPKLRLHWPGATYGGALLLLLISYGLELGSVHCYEKMYSQTEKQRYDGWYNNLAHPDWGSVDSHLVRKAPPSYSDGVYAMAGANRPSTRRLSRLFMRGKDGLGSKFNRTALLAFFGQLVANEIVMASESGCPIEMHRIEIEKCDEMYDRECRGDKYIPFHRAAYDRDTGQSPNAPREQINQMTAWIDGSFIYSTSEAWLNAMRSFHNGTLLTEKDGKLPVRNTMRVPLFNNPVPSVMKMLSPERLFLLGDPRTNQNPAILSFAILFLRWHNTLAQRIKRVHPDWSDEDIYQRARHTVIASLQNVIVYEYLPAFLGTSLPPYEGYKQDIHPGIGHIFQAAAFRFGHTMIPPGIYRRDGQCNFKETPMGYPAVRLCSTWWDSSGFFADTSVEEVLMGLASQISEREDPVLCSDVRDKLFGPMEFTRRDLGALNIMRGRDNGLPDYNTARESYGLKRHKTWTDINPPLFETQPELLDMLKEAYDNKLDDVDVYVGGMLESYGQPGEFFTAVIKEQFQRLRDADRFWFENERNGIFTPEEIAELRKITLWDIIVNSTDVKEEEIQKDVFMWRTGDPCPQPMQLNATELEPCTYLEGYDYFSGSELMFIYVCVFLGFVPILCAGAGYCVVKLQNSKRRRLKIRQEALRAPQHKGSVDKMLAREWLHANHKRLVTVKFGPEAAIYTVDRKGEKLRTFSLKHIDVVSVEESATNHIKKKPYILLRVPSDHDLVLELESYGARRKFVKKLEDFLLLHKKEMTLMEVNRDIMLARAETRERRQKRLEYFFREAYALTFGLRPGERRRRSDASSDGEVMTVMRTSLSKAEFAAALGMKPNDMFVRKMFNIVDKDQDGRISFQEFLETVVLFSRGKTDDKLRIIFDMCDNDRNGVIDKGELSEMMRSLVEIARTTSLGDDQVTELIDGMFQDVGLEHKNHLTYQDFKLMMKEYKGDFVAIGLDCKGAKQNFLDTSTNVARMTSFNIEPMQDKPRHWLLAKWDAYITFLEENRQNIFYLFLFYVVTIVLFVERFIHYSFMAEHTDLRHIMGVGIAITRGSAASLSFCYSLLLLTMSRNLITKLKEFPIQQYIPLDSHIQFHKIAACTALFFSVLHTVGHIVNFYHVSTQSHENLRCLTREVHFASDYKPDITFWLFQTVTGTTGVMLFIIMCIIFVFAHPTIRKKAYNFFWNMHTLYIGLYLLSLIHGLARLTGPPRFWMFFLGPGIVYTLDKIVSLRTKYMALDVIDTDLLPSDVIKIKFYRPPNLKYLSGQWVRLSCTAFRPHEMHSFTLTSAPHENFLSCHIKAQGPWTWKLRNYFDPCNYNPEDQPKIRIEGPFGGGNQDWYKFEVAVMVGGGIGVTPYASILNDLVFGTSTNRYSGVACKKVYFLWICPSHKHFEWFIDVLRDVEKKDVTNVLEIHIFITQFFHKFDLRTTMLYICENHFQRLSKTSIFTGLKAVNHFGRPDMSSFLKFVQKKHSYVSKIGVFSCGPRPLTKSVMSACDEVNKTRKLPYFIHHFENFG.

The tract at residues 1-29 (MSVPSAPHQRAESKNRVPRPGQKNRKLPK) is disordered. The Extracellular portion of the chain corresponds to 1 to 626 (MSVPSAPHQR…EGYDYFSGSE (626 aa)). The tract at residues 63-628 (MYSQTEKQRY…YDYFSGSELM (566 aa)) is peroxidase-like; mediates peroxidase activity. Residues asparagine 133, asparagine 233, asparagine 577, and asparagine 606 are each glycosylated (N-linked (GlcNAc...) asparagine). The helical transmembrane segment at 627–647 (LMFIYVCVFLGFVPILCAGAG) threads the bilayer. Topologically, residues 648–1029 (YCVVKLQNSK…ITFLEENRQN (382 aa)) are cytoplasmic. Serine 826 carries the phosphoserine modification. 3 EF-hand domains span residues 855 to 890 (PNDM…FSRG), 891 to 926 (KTDD…LVEI), and 936 to 971 (QVTE…YKGD). Residues aspartate 868, aspartate 870, aspartate 872, arginine 874, glutamate 879, aspartate 904, aspartate 906, asparagine 908, and glutamate 915 each contribute to the Ca(2+) site. The helical transmembrane segment at 1030-1050 (IFYLFLFYVVTIVLFVERFIH) threads the bilayer. The Extracellular portion of the chain corresponds to 1051–1065 (YSFMAEHTDLRHIMG). Residues 1066-1086 (VGIAITRGSAASLSFCYSLLL) form a helical membrane-spanning segment. The 141-residue stretch at 1078–1218 (LSFCYSLLLL…TLYIGLYLLS (141 aa)) folds into the Ferric oxidoreductase domain. The Cytoplasmic segment spans residues 1087–1116 (LTMSRNLITKLKEFPIQQYIPLDSHIQFHK). Phosphotyrosine is present on tyrosine 1105. Residues 1117–1137 (IAACTALFFSVLHTVGHIVNF) form a helical membrane-spanning segment. The Extracellular portion of the chain corresponds to 1138 to 1171 (YHVSTQSHENLRCLTREVHFASDYKPDITFWLFQ). The helical transmembrane segment at 1172–1192 (TVTGTTGVMLFIIMCIIFVFA) threads the bilayer. The Cytoplasmic segment spans residues 1193 to 1202 (HPTIRKKAYN). A helical transmembrane segment spans residues 1203–1223 (FFWNMHTLYIGLYLLSLIHGL). The Extracellular segment spans residues 1224 to 1230 (ARLTGPP). A helical transmembrane segment spans residues 1231–1251 (RFWMFFLGPGIVYTLDKIVSL). Topologically, residues 1252–1537 (RTKYMALDVI…YFIHHFENFG (286 aa)) are cytoplasmic. The 106-residue stretch at 1253–1358 (TKYMALDVID…EGPFGGGNQD (106 aa)) folds into the FAD-binding FR-type domain.

This sequence in the N-terminal section; belongs to the peroxidase family.

It localises to the membrane. The enzyme catalyses NADH + O2 + H(+) = H2O2 + NAD(+). It carries out the reaction NADPH + O2 + H(+) = H2O2 + NADP(+). With respect to regulation, peroxidase activity is inhibited by aminotriazole and azide. In terms of biological role, plays a role in innate immunity limiting microbial proliferation in the gut. Acts downstream of a hh-signaling pathway to induce the production of reactive oxygen species (ROS) in response to intestinal bacterial infection. May generate antimicrobial oxidative burst through its peroxidase-like domain. This is Dual oxidase (Duox) from Drosophila melanogaster (Fruit fly).